Reading from the N-terminus, the 209-residue chain is Guanylate kinase (209 aa).

The Guanylate kinase-like domain occupies 5–184 (GLLIVFSGPS…AAERVKRVIE (180 aa)). 12–19 (GPSGVGKG) lines the ATP pocket.

This sequence belongs to the guanylate kinase family.

Its subcellular location is the cytoplasm. It carries out the reaction GMP + ATP = GDP + ADP. Its function is as follows. Essential for recycling GMP and indirectly, cGMP. This is Guanylate kinase from Streptococcus thermophilus (strain CNRZ 1066).